The chain runs to 194 residues: Erythropoietin (194 aa).

Positions 1–26 are cleaved as a signal peptide; it reads MGARECPARLLLLSLLLLPLGLPVLG. 2 cysteine pairs are disulfide-bonded: Cys33/Cys189 and Cys55/Cys59. Residue Asn50 is glycosylated (N-linked (GlcNAc...) asparagine). 3 N-linked (GlcNAc...) asparagine glycosylation sites follow: Asn64, Asn109, and Asn172.

It belongs to the EPO/TPO family. As to expression, produced by kidney or liver of adult mammals and by liver of fetal or neonatal mammals.

Its subcellular location is the secreted. Its function is as follows. Hormone involved in the regulation of erythrocyte proliferation and differentiation and the maintenance of a physiological level of circulating erythrocyte mass. Binds to EPOR leading to EPOR dimerization and JAK2 activation thereby activating specific downstream effectors, including STAT1 and STAT3. The sequence is that of Erythropoietin (EPO) from Sus scrofa (Pig).